The chain runs to 154 residues: Large ribosomal subunit protein uL16 (154 aa).

The protein belongs to the universal ribosomal protein uL16 family. Part of the 50S ribosomal subunit.

Its function is as follows. Binds 23S rRNA and is also seen to make contacts with the A and possibly P site tRNAs. The protein is Large ribosomal subunit protein uL16 of Synechococcus sp. (strain RCC307).